A 92-amino-acid chain; its full sequence is Nodulation protein F (92 aa).

Residues 4-88 form the Carrier domain; the sequence is QLTLEIISAI…DVVEAVRGLL (85 aa). S45 carries the O-(pantetheine 4'-phosphoryl)serine modification.

In terms of processing, 4'-phosphopantetheine is transferred from CoA to a specific serine of apo-NodF.

In terms of biological role, proposed to synthesize nod factor fatty acyl chain. Involved in trans-2,trans-4,trans-6,cis-11-octadecatetraenoic acid biosynthesis. This chain is Nodulation protein F (nodF), found in Rhizobium leguminosarum bv. viciae.